A 376-amino-acid chain; its full sequence is Queuine tRNA-ribosyltransferase (376 aa).

Aspartate 93 (proton acceptor) is an active-site residue. Residues 93–97 (DSGGF), aspartate 147, glutamine 190, and glycine 217 each bind substrate. The tract at residues 248–254 (GVGKPDD) is RNA binding. Aspartate 267 serves as the catalytic Nucleophile. The Zn(2+) site is built by cysteine 305, cysteine 307, cysteine 310, and histidine 336.

The protein belongs to the queuine tRNA-ribosyltransferase family. In terms of assembly, homodimer. Within each dimer, one monomer is responsible for RNA recognition and catalysis, while the other monomer binds to the replacement base PreQ1. Zn(2+) serves as cofactor.

It carries out the reaction 7-aminomethyl-7-carbaguanine + guanosine(34) in tRNA = 7-aminomethyl-7-carbaguanosine(34) in tRNA + guanine. The protein operates within tRNA modification; tRNA-queuosine biosynthesis. In terms of biological role, catalyzes the base-exchange of a guanine (G) residue with the queuine precursor 7-aminomethyl-7-deazaguanine (PreQ1) at position 34 (anticodon wobble position) in tRNAs with GU(N) anticodons (tRNA-Asp, -Asn, -His and -Tyr). Catalysis occurs through a double-displacement mechanism. The nucleophile active site attacks the C1' of nucleotide 34 to detach the guanine base from the RNA, forming a covalent enzyme-RNA intermediate. The proton acceptor active site deprotonates the incoming PreQ1, allowing a nucleophilic attack on the C1' of the ribose to form the product. After dissociation, two additional enzymatic reactions on the tRNA convert PreQ1 to queuine (Q), resulting in the hypermodified nucleoside queuosine (7-(((4,5-cis-dihydroxy-2-cyclopenten-1-yl)amino)methyl)-7-deazaguanosine). The chain is Queuine tRNA-ribosyltransferase from Cereibacter sphaeroides (strain ATCC 17029 / ATH 2.4.9) (Rhodobacter sphaeroides).